The following is a 135-amino-acid chain: Agouti-signaling protein (135 aa).

Positions 1 to 22 (MNILRLLLATLLVCLCLLTAYS) are cleaved as a signal peptide. Asn-39 carries an N-linked (GlcNAc...) asparagine glycan. The segment at 56-101 (NKKSKKISRKEAEKKRSSKKKASMKNVAQPRRPRPPPPAPCVATRD) is disordered. Disulfide bonds link Cys-96–Cys-111, Cys-103–Cys-117, Cys-110–Cys-128, Cys-114–Cys-135, and Cys-119–Cys-126. In terms of domain architecture, Agouti spans 96–135 (CVATRDSCKPPAPACCDPCASCQCRFFRSSCSCRVLNPTC).

It is found in the secreted. Functionally, involved in the regulation of melanogenesis. The binding of ASP to MC1R precludes alpha-MSH initiated signaling and thus blocks production of cAMP, leading to a down-regulation of eumelanogenesis (brown/black pigment) and thus increasing synthesis of pheomelanin (yellow/red pigment). In Felis catus (Cat), this protein is Agouti-signaling protein (ASIP).